The chain runs to 348 residues: MGRNIKIIKKNLAFLNDFSPGILACLIISVLAYGLEILEKQLFGQAWLESLVLAILLGSITGSCFTLPKYFQKGITFCAKTLLEIAIVLLGASISVNAVLSAGWNLLASIIFVIFVTLILSFTIGRLFGLSSHLAMLVACGNAICGNSAIVAVAPVIKAKHEEVASSIAFTALLGVLIILFLPFLHPFLNLSFSQYGVLSGMVVYAVPQVLAATASVSFVSVQIATVVKLVRVLMLGPLIFALSILYHRSAQTRLRLHTLVPWFIIGFIFMMLIRSSNLIPEKTLIPIRFIAQLFTVISMAALGLGVDIRSLKKAGWRVILASTCSILILGVCSLIMIQLNDLNPIMF.

Helical transmembrane passes span 13–35 (AFLN…AYGL), 45–67 (QAWL…CFTL), 74–96 (GITF…SISV), 106–128 (LLAS…GRLF), 135–157 (AMLV…APVI), 167–189 (SIAF…HPFL), 196–218 (YGVL…ASVS), 223–245 (QIAT…ALSI), 257–275 (LHTL…MLIR), 285–307 (LIPI…GLGV), and 319–341 (VILA…IQLN).

It belongs to the UPF0324 family.

It is found in the cell membrane. The polypeptide is UPF0324 membrane protein BH02290 (Bartonella henselae (strain ATCC 49882 / DSM 28221 / CCUG 30454 / Houston 1) (Rochalimaea henselae)).